Here is a 240-residue protein sequence, read N- to C-terminus: Ribonuclease HII (240 aa).

In terms of domain architecture, RNase H type-2 spans 7-215 (RYAIGIDEAG…LKRIAPGWYV (209 aa)). Residues D13, E14, and D112 each coordinate a divalent metal cation.

The protein belongs to the RNase HII family. Mn(2+) serves as cofactor. Mg(2+) is required as a cofactor.

The protein localises to the cytoplasm. The enzyme catalyses Endonucleolytic cleavage to 5'-phosphomonoester.. Its function is as follows. Endonuclease that specifically degrades the RNA of RNA-DNA hybrids. This chain is Ribonuclease HII, found in Hyperthermus butylicus (strain DSM 5456 / JCM 9403 / PLM1-5).